Here is a 208-residue protein sequence, read N- to C-terminus: Protein-L-isoaspartate O-methyltransferase (208 aa).

The active site involves Ser-59.

The protein belongs to the methyltransferase superfamily. L-isoaspartyl/D-aspartyl protein methyltransferase family.

It is found in the cytoplasm. The catalysed reaction is [protein]-L-isoaspartate + S-adenosyl-L-methionine = [protein]-L-isoaspartate alpha-methyl ester + S-adenosyl-L-homocysteine. In terms of biological role, catalyzes the methyl esterification of L-isoaspartyl residues in peptides and proteins that result from spontaneous decomposition of normal L-aspartyl and L-asparaginyl residues. It plays a role in the repair and/or degradation of damaged proteins. The chain is Protein-L-isoaspartate O-methyltransferase from Escherichia coli O1:K1 / APEC.